The sequence spans 77 residues: UPF0401 protein ECP_3010 (77 aa).

It belongs to the UPF0401 family.

The sequence is that of UPF0401 protein ECP_3010 from Escherichia coli O6:K15:H31 (strain 536 / UPEC).